A 471-amino-acid chain; its full sequence is Tryptophanase (471 aa).

N6-acetyllysine occurs at positions 5, 115, and 156. K270 carries the post-translational modification N6-(pyridoxal phosphate)lysine. K450 is subject to N6-acetyllysine.

Belongs to the beta-eliminating lyase family. Homotetramer. Requires pyridoxal 5'-phosphate as cofactor.

The enzyme catalyses L-tryptophan + H2O = indole + pyruvate + NH4(+). Its pathway is amino-acid degradation; L-tryptophan degradation via pyruvate pathway; indole and pyruvate from L-tryptophan: step 1/1. This Escherichia coli O157:H7 protein is Tryptophanase (tnaA).